Consider the following 131-residue polypeptide: Transcription antitermination protein NusB (131 aa).

Belongs to the NusB family.

In terms of biological role, involved in transcription antitermination. Required for transcription of ribosomal RNA (rRNA) genes. Binds specifically to the boxA antiterminator sequence of the ribosomal RNA (rrn) operons. This chain is Transcription antitermination protein NusB, found in Bacillus subtilis (strain 168).